The chain runs to 328 residues: Malate dehydrogenase (328 aa).

Residue 11–17 (GAAGQIG) participates in NAD(+) binding. 2 residues coordinate substrate: arginine 94 and arginine 100. Residues asparagine 107, glutamine 114, and 131–133 (VGN) contribute to the NAD(+) site. Residues asparagine 133 and arginine 164 each coordinate substrate. The Proton acceptor role is filled by histidine 189.

It belongs to the LDH/MDH superfamily. MDH type 2 family.

It carries out the reaction (S)-malate + NAD(+) = oxaloacetate + NADH + H(+). Functionally, catalyzes the reversible oxidation of malate to oxaloacetate. In Xanthomonas oryzae pv. oryzae (strain PXO99A), this protein is Malate dehydrogenase.